Reading from the N-terminus, the 391-residue chain is Probable dual-specificity RNA methyltransferase RlmN (391 aa).

The tract at residues 1–33 (MTTPLDTPTREPLPLAPAGPGKLVMSAPRRGKP) is disordered. A compositionally biased stretch (low complexity) spans 12 to 21 (PLPLAPAGPG). E124 (proton acceptor) is an active-site residue. Positions 130 to 373 (YKNRDTICIS…TTVRDTRGSD (244 aa)) constitute a Radical SAM core domain. Cysteines 137 and 378 form a disulfide. 3 residues coordinate [4Fe-4S] cluster: C144, C148, and C151. S-adenosyl-L-methionine contacts are provided by residues 199 to 200 (GE), S233, 256 to 258 (SLH), and N335. The active-site S-methylcysteine intermediate is C378.

Belongs to the radical SAM superfamily. RlmN family. [4Fe-4S] cluster is required as a cofactor.

Its subcellular location is the cytoplasm. The catalysed reaction is adenosine(2503) in 23S rRNA + 2 reduced [2Fe-2S]-[ferredoxin] + 2 S-adenosyl-L-methionine = 2-methyladenosine(2503) in 23S rRNA + 5'-deoxyadenosine + L-methionine + 2 oxidized [2Fe-2S]-[ferredoxin] + S-adenosyl-L-homocysteine. It catalyses the reaction adenosine(37) in tRNA + 2 reduced [2Fe-2S]-[ferredoxin] + 2 S-adenosyl-L-methionine = 2-methyladenosine(37) in tRNA + 5'-deoxyadenosine + L-methionine + 2 oxidized [2Fe-2S]-[ferredoxin] + S-adenosyl-L-homocysteine. In terms of biological role, specifically methylates position 2 of adenine 2503 in 23S rRNA and position 2 of adenine 37 in tRNAs. In Kineococcus radiotolerans (strain ATCC BAA-149 / DSM 14245 / SRS30216), this protein is Probable dual-specificity RNA methyltransferase RlmN.